Reading from the N-terminus, the 382-residue chain is Neuropeptide Y receptor type 1 (382 aa).

The Extracellular segment spans residues 1 to 33; the sequence is MNSTSFSQVENHSIFCNFSENSQFLAFESDDCH. 3 N-linked (GlcNAc...) asparagine glycosylation sites follow: Asn-2, Asn-11, and Asn-17. A helical membrane pass occupies residues 34-54; it reads LPLAMIFTLALAYGAVIILGV. At 55–75 the chain is on the cytoplasmic side; that stretch reads TGNLALIMIILKQKEMRNVTN. The helical transmembrane segment at 76–96 threads the bilayer; the sequence is ILIVNLSFSDLLVAIMCLPFT. Topologically, residues 97 to 115 are extracellular; it reads FVYTLMDHWVFGEAMCKLN. A disulfide bond links Cys-112 and Cys-197. The helical transmembrane segment at 116–136 threads the bilayer; sequence PFVQCVSITVSIFSLVLIAVE. Over 137–153 the chain is Cytoplasmic; that stretch reads RHQLIINPRGWRPNNRH. A helical membrane pass occupies residues 154-174; sequence AYVGIAVIWVLAVVSSLPFLI. The Extracellular segment spans residues 175–210; sequence YQVLTDEPFQNVTLDAFKDKYVCFDKFPSDSHRLSY. An N-linked (GlcNAc...) asparagine glycan is attached at Asn-185. The helical transmembrane segment at 211–231 threads the bilayer; the sequence is TTLLLMLQYFGPLCFIFICYF. The Cytoplasmic segment spans residues 232–259; it reads KIYIRLKRRNNMMDKMRDNKYRSSETKR. A helical membrane pass occupies residues 260–280; the sequence is INIMLLSIVVAFAVCWLPLTI. The Extracellular portion of the chain corresponds to 281–298; the sequence is FNTVFDWNHQIIATCNHN. A helical transmembrane segment spans residues 299–319; that stretch reads LLFLLCHLTAMISTCVNPIFY. The Cytoplasmic segment spans residues 320–382; it reads GFLNKNFQRD…KINNDDNEKI (63 aa). Cys-337 carries S-palmitoyl cysteine lipidation. Position 367 is a phosphoserine (Ser-367).

The protein belongs to the G-protein coupled receptor 1 family.

It localises to the cell membrane. Its function is as follows. Receptor for neuropeptide Y and peptide YY. The polypeptide is Neuropeptide Y receptor type 1 (NPY1R) (Canis lupus familiaris (Dog)).